Here is a 145-residue protein sequence, read N- to C-terminus: Large ribosomal subunit protein uL15 (145 aa).

A disordered region spans residues 1-58; it reads MFNLLKPKGASKRRKIVGRGPGSGLGKTSGRGQKGQKARNTSPRLGFEGGQTPLYRRL. The segment covering 19 to 33 has biased composition (gly residues); that stretch reads RGPGSGLGKTSGRGQ.

Belongs to the universal ribosomal protein uL15 family. Part of the 50S ribosomal subunit.

Its function is as follows. Binds to the 23S rRNA. This is Large ribosomal subunit protein uL15 from Borrelia garinii subsp. bavariensis (strain ATCC BAA-2496 / DSM 23469 / PBi) (Borreliella bavariensis).